Reading from the N-terminus, the 167-residue chain is Small ribosomal subunit protein uS5 (167 aa).

Residues 12-75 form the S5 DRBM domain; the sequence is LQEKLIAVNR…EKARRSMVTI (64 aa).

It belongs to the universal ribosomal protein uS5 family. In terms of assembly, part of the 30S ribosomal subunit. Contacts proteins S4 and S8.

In terms of biological role, with S4 and S12 plays an important role in translational accuracy. Its function is as follows. Located at the back of the 30S subunit body where it stabilizes the conformation of the head with respect to the body. The protein is Small ribosomal subunit protein uS5 of Vibrio cholerae serotype O1 (strain ATCC 39541 / Classical Ogawa 395 / O395).